The following is a 257-amino-acid chain: 5'-nucleotidase SurE (257 aa).

4 residues coordinate a divalent metal cation: Asp8, Asp9, Ser40, and Asn92.

This sequence belongs to the SurE nucleotidase family. A divalent metal cation is required as a cofactor.

It localises to the cytoplasm. It carries out the reaction a ribonucleoside 5'-phosphate + H2O = a ribonucleoside + phosphate. Its function is as follows. Nucleotidase that shows phosphatase activity on nucleoside 5'-monophosphates. In Rhizobium rhizogenes (strain K84 / ATCC BAA-868) (Agrobacterium radiobacter), this protein is 5'-nucleotidase SurE.